The primary structure comprises 865 residues: Alanine--tRNA ligase (865 aa).

Zn(2+) is bound by residues H554, H558, C656, and H660.

Belongs to the class-II aminoacyl-tRNA synthetase family. It depends on Zn(2+) as a cofactor.

The protein resides in the cytoplasm. The enzyme catalyses tRNA(Ala) + L-alanine + ATP = L-alanyl-tRNA(Ala) + AMP + diphosphate. Functionally, catalyzes the attachment of alanine to tRNA(Ala) in a two-step reaction: alanine is first activated by ATP to form Ala-AMP and then transferred to the acceptor end of tRNA(Ala). Also edits incorrectly charged Ser-tRNA(Ala) and Gly-tRNA(Ala) via its editing domain. This Idiomarina loihiensis (strain ATCC BAA-735 / DSM 15497 / L2-TR) protein is Alanine--tRNA ligase.